Consider the following 295-residue polypeptide: Dual specificity protein phosphatase 15 (295 aa).

Residues 1 to 141 (MTEGVLPGLY…LEEFGWASSQ (141 aa)) form the Tyrosine-protein phosphatase domain. Residue Thr-2 is the site of N-myristoyl glycine attachment. Cys-85 (phosphocysteine intermediate) is an active-site residue. Positions 251 to 270 (SSSCTLSASTERPDGSSTPG) are enriched in polar residues. Positions 251 to 272 (SSSCTLSASTERPDGSSTPGNP) are disordered.

Belongs to the protein-tyrosine phosphatase family. Non-receptor class dual specificity subfamily. In terms of tissue distribution, highly expressed in testis. Expressed in brain; up-regulated in patients with multiple sclerosis gray matter lesions.

It localises to the cytoplasm. Its subcellular location is the cell membrane. The catalysed reaction is O-phospho-L-tyrosyl-[protein] + H2O = L-tyrosyl-[protein] + phosphate. It carries out the reaction O-phospho-L-seryl-[protein] + H2O = L-seryl-[protein] + phosphate. It catalyses the reaction O-phospho-L-threonyl-[protein] + H2O = L-threonyl-[protein] + phosphate. May dephosphorylate MAPK13, ATF2, ERBB3, PDGFRB and SNX6. Functionally, may play a role in the regulation of oligodendrocyte differentiation. May play a role in the regulation of myelin formation. Involved in the regulation of Erk1/2 phosphorylation in Schwann cells; the signaling may be linked to the regulation of myelination. In Homo sapiens (Human), this protein is Dual specificity protein phosphatase 15.